The primary structure comprises 1055 residues: Ephrin type-B receptor 2 (1055 aa).

The N-terminal stretch at 1-18 is a signal peptide; sequence MALRRLGAALLLLPLLAA. The Extracellular portion of the chain corresponds to 19-543; the sequence is VEETLMDSTT…QTSIQEKLPL (525 aa). Residues 20–202 form the Eph LBD domain; the sequence is EETLMDSTTA…FYRKCPRIIQ (183 aa). 2 cysteine pairs are disulfide-bonded: Cys-62–Cys-184 and Cys-97–Cys-107. N-linked (GlcNAc...) asparagine glycans are attached at residues Asn-265, Asn-336, Asn-428, and Asn-482. Fibronectin type-III domains are found at residues 324 to 434 and 435 to 530; these read IPSA…TNQA and APSA…TMTE. A helical transmembrane segment spans residues 544-564; the sequence is IIGSSAAGLVFLIAVVVIAIV. At 565-1055 the chain is on the cytoplasmic side; the sequence is CNRRGFERAD…KESNDCSCGG (491 aa). The Protein kinase domain occupies 621-884; sequence VKIEQVIGAG…QIVNTLDKMI (264 aa). ATP contacts are provided by residues 627-635 and Lys-653; that span reads IGAGEFGEV. The active-site Proton acceptor is Asp-746. Lys-891 participates in a covalent cross-link: Glycyl lysine isopeptide (Lys-Gly) (interchain with G-Cter in ubiquitin). Residues 913 to 977 form the SAM domain; sequence TSFNTVDEWL…LNSIQVMRAQ (65 aa). Ser-983 and Val-984 each carry phosphoserine. The PDZ-binding (in isoform 2) signature appears at 984–986; it reads VEG. The segment at 990-1055 is disordered; the sequence is ARRPRATGRT…KESNDCSCGG (66 aa). Positions 991–1002 are enriched in basic residues; it reads RRPRATGRTKRC. Basic and acidic residues predominate over residues 1025 to 1049; the sequence is KKTDPGRGREIQGIFFKEDSHKESN.

Belongs to the protein kinase superfamily. Tyr protein kinase family. Ephrin receptor subfamily. In terms of assembly, heterotetramer upon binding of the ligand. The heterotetramer is composed of an ephrin dimer and a receptor dimer. Interacts (via PDZ-binding motif) with GRIP1 and PICK1 (via PDZ domain). Interacts with ARHGEF15; mediates ARHGEF15 phosphorylation, ubiquitination and degradation by the proteasome. Interacts with AQP1; involved in endolymph production in the inner ear. Interacts with SPSB1 and SPSB4. The phosphorylated form interacts with RASA1 (via SH2 domain 1). Interacts with EFNA5. Interacts with SH2D3C. Autophosphorylated; ligand binding stimulates autophosphorylation on tyrosine residues. Post-translationally, polyubiquitinated; ligand binding stimulates ubiquitination. Ubiquitinated by RNF186 at Lys-891, mainly through 'Lys-27'-linked polyubiquitin chains. Ubiquitinated by CRL2(KLHDC2) E3 ligase complex. In terms of processing, ligand binding induces cleavage by matrix metalloproteinases (MMPs) such as MMP7/MMP9, producing an EphB2/N-terminal fragment (NTF) and a C-terminal long fragment (EphB2-LF). EphB2-LF is further cleaved by MMPs, producing EphB2/CTF1 which is further cleaved by the PS1/gamma-secretase producing EphB2/CTF2. In terms of tissue distribution, brain, heart, lung, kidney, placenta, pancreas, liver and skeletal muscle. Preferentially expressed in fetal brain.

It is found in the cell membrane. The protein localises to the cell projection. It localises to the axon. The protein resides in the dendrite. The enzyme catalyses L-tyrosyl-[protein] + ATP = O-phospho-L-tyrosyl-[protein] + ADP + H(+). In terms of biological role, receptor tyrosine kinase which binds promiscuously transmembrane ephrin-B family ligands residing on adjacent cells, leading to contact-dependent bidirectional signaling into neighboring cells. The signaling pathway downstream of the receptor is referred to as forward signaling while the signaling pathway downstream of the ephrin ligand is referred to as reverse signaling. Functions in axon guidance during development. Involved in the guidance of commissural axons, that form a major interhemispheric connection between the 2 temporal lobes of the cerebral cortex. Also involved in guidance of contralateral inner ear efferent growth cones at the midline and of retinal ganglion cell axons to the optic disk. In addition to axon guidance, also regulates dendritic spines development and maturation and stimulates the formation of excitatory synapses. Upon activation by EFNB1, abolishes the ARHGEF15-mediated negative regulation on excitatory synapse formation. Controls other aspects of development including angiogenesis, palate development and in inner ear development through regulation of endolymph production. Forward and reverse signaling through the EFNB2/EPHB2 complex regulate movement and adhesion of cells that tubularize the urethra and septate the cloaca. May function as a tumor suppressor. May be involved in the regulation of platelet activation and blood coagulation. This chain is Ephrin type-B receptor 2 (EPHB2), found in Homo sapiens (Human).